Consider the following 190-residue polypeptide: Probable chorismate pyruvate-lyase (190 aa).

The substrate site is built by arginine 74, leucine 112, and glutamate 173.

The protein belongs to the UbiC family.

Its subcellular location is the cytoplasm. The enzyme catalyses chorismate = 4-hydroxybenzoate + pyruvate. It functions in the pathway cofactor biosynthesis; ubiquinone biosynthesis. Functionally, removes the pyruvyl group from chorismate, with concomitant aromatization of the ring, to provide 4-hydroxybenzoate (4HB) for the ubiquinone pathway. The polypeptide is Probable chorismate pyruvate-lyase (Bordetella bronchiseptica (strain ATCC BAA-588 / NCTC 13252 / RB50) (Alcaligenes bronchisepticus)).